The primary structure comprises 422 residues: Metallocarboxypeptidase A-like protein TRV_02598 (422 aa).

A signal peptide spans 1–16; it reads MQSLLLLATLLGSALG. The propeptide at 17-119 is activation peptide; sequence GAIPSQSANY…ELLTLDGGAN (103 aa). The region spanning 125 to 421 is the Peptidase M14 domain; the sequence is SYHKYEDHLK…AGVKAMFSKL (297 aa). Residues His-185 and Glu-188 each coordinate Zn(2+). Substrate contacts are provided by residues 185–188, Arg-240, and 256–257; these read HARE and NR. Cys-250 and Cys-273 form a disulfide bridge. Residue His-311 coordinates Zn(2+). 312 to 313 contacts substrate; that stretch reads SY. Glu-387 acts as the Proton donor/acceptor in catalysis.

This sequence belongs to the peptidase M14 family. The cofactor is Zn(2+).

The protein resides in the secreted. Its function is as follows. Extracellular metalloprotease that contributes to pathogenicity. The protein is Metallocarboxypeptidase A-like protein TRV_02598 of Trichophyton verrucosum (strain HKI 0517).